The sequence spans 106 residues: Adipokinetic hormone/corazonin-related peptide (106 aa).

An N-terminal signal peptide occupies residues 1-25 (MRNSIYKLIMFAVLCMVLTSSLSYA). Residue glutamine 26 is modified to Pyrrolidone carboxylic acid. At alanine 35 the chain carries Alanine amide. The propeptide occupies 39–106 (SLAEAAQSTG…GLPLFSNGHL (68 aa)).

Belongs to the AKH/HRTH/RPCH family. Only expressed in the head and thorax body segments of adults. Is more expressed in adult males than in females.

It localises to the secreted. Neuropeptide with neuromodulator or neurotransmitter role that activates the adipokinetic hormone/corazonin-related peptide receptor (ACPR). May function in regulation of post-ecdysis activities. Does not activate the A.gambiae adipokinetic hormone (AKH) and corazonin (CRZ) receptors. This Aedes aegypti (Yellowfever mosquito) protein is Adipokinetic hormone/corazonin-related peptide.